We begin with the raw amino-acid sequence, 434 residues long: Perilipin-3 (434 aa).

A disordered region spans residues 1–22 (MSADGAEADGSTQVTVEEPVQQ). At serine 2 the chain carries N-acetylserine. Residue serine 31 is modified to Phosphoserine. Lysine 65 bears the N6-acetyllysine mark. At serine 91 the chain carries Phosphoserine. Lysine 122 participates in a covalent cross-link: Glycyl lysine isopeptide (Lys-Gly) (interchain with G-Cter in SUMO1). A phosphoserine mark is found at serine 130 and serine 148. The residue at position 170 (threonine 170) is a Phosphothreonine. 2 positions are modified to phosphoserine: serine 175 and serine 179. Threonine 216 is modified (phosphothreonine). Residues serine 217 and serine 241 each carry the phosphoserine modification. Tyrosine 251 is subject to Phosphotyrosine. Coiled-coil stretches lie at residues 252 to 277 (EHSL…QVLS) and 353 to 377 (TNVK…SSIH).

Belongs to the perilipin family. As to quaternary structure, homooligomer. Interacts with M6PR (via the cytoplasmic domain). Interacts with IGF2R (via the cytoplasmic domain). In terms of assembly, may exist as a homodimer. In terms of processing, phosphorylation at Tyr-251 by isoform 1 of CHKA (CHKalpha2) promotes dissociation from lipid droplets: dissociation is followed by recruitment of autophagosome machinery to lipid droplets and subsequent lipid droplet lipolysis.

The protein resides in the lipid droplet. The protein localises to the endosome membrane. It localises to the cytoplasm. Structural component of lipid droplets, which is required for the formation and maintenance of lipid storage droplets. Required for the transport of mannose 6-phosphate receptors (MPR) from endosomes to the trans-Golgi network. The polypeptide is Perilipin-3 (PLIN3) (Homo sapiens (Human)).